The primary structure comprises 359 residues: N-acetylneuraminate-9-phosphate synthase (359 aa).

Lysine 61, lysine 74, and lysine 79 each carry N6-acetyllysine. Phosphoserine is present on serine 275. N6-acetyllysine is present on lysine 290. In terms of domain architecture, AFP-like spans 294 to 353 (SVVAKVKIPEGTILTMDMLTVKVGEPKGYPPEDIFNLVGKKVLVTVEEDDTIMEELVDNH).

As to expression, ubiquitous.

The catalysed reaction is aldehydo-N-acetyl-D-mannosamine 6-phosphate + phosphoenolpyruvate + H2O = N-acetylneuraminate 9-phosphate + phosphate. It catalyses the reaction aldehydo-D-mannose 6-phosphate + phosphoenolpyruvate + H2O = 3-deoxy-D-glycero-beta-D-galacto-non-2-ulopyranosonate 9-phosphate + phosphate. In terms of biological role, catalyzes the condensation of phosphoenolpyruvate (PEP) and N-acetylmannosamine 6-phosphate (ManNAc-6-P) to synthesize N-acetylneuraminate-9-phosphate (Neu5Ac-9-P). Also catalyzes the condensation of PEP and D-mannose 6-phosphate (Man-6-P) to produce 3-deoxy-D-glycero-beta-D-galacto-non-2-ulopyranosonate 9-phosphate (KDN-9-P). Neu5Ac-9-P and KDN-9-P are the phosphorylated forms of sialic acids N-acetylneuraminic acid (Neu5Ac) and deaminoneuraminic acid (KDN), respectively. Required for brain and skeletal development. The protein is N-acetylneuraminate-9-phosphate synthase of Homo sapiens (Human).